We begin with the raw amino-acid sequence, 121 residues long: Large ribosomal subunit protein bL12 (121 aa).

Belongs to the bacterial ribosomal protein bL12 family. As to quaternary structure, homodimer. Part of the ribosomal stalk of the 50S ribosomal subunit. Forms a multimeric L10(L12)X complex, where L10 forms an elongated spine to which 2 to 4 L12 dimers bind in a sequential fashion. Binds GTP-bound translation factors.

Functionally, forms part of the ribosomal stalk which helps the ribosome interact with GTP-bound translation factors. Is thus essential for accurate translation. This chain is Large ribosomal subunit protein bL12, found in Pseudomonas fluorescens (strain SBW25).